The following is a 463-amino-acid chain: MDDIEDSLDQWKFAQCFGDKGDVEDITEADIISAVEFDHTGDYLATGDKGGRVVLFERNHSKKGCEYKFFTEFQSHEPEFDYLKSLEIEEKINKIRWCKRTNRAHFLLSTNDKTIKLWKLYEKNLKVVAENNLSDSFHSPMQGPLTTPSQLRLPRLNHHDMIIAAYPRRVYANAHAYHINSISVNSDAETYISADDLRINLWNLSISDHSFNIVDIKPENMEELTEVITSAEFHPINCNHLMYSSSKGNIKLLDLRQSALCDNPCKLFEDQEDQDSKSFFSEIISSISDVKFSQNGRYILSRDYLTLKIWDVNMEKAPVKTIPLHDVLRSKLCDLYENDCIFDKFECTFSGDDKHVLSGSYSNNFGIYPTDSSLPGDRGQIVLQADKAAFRARKSAANNVPKLNAVKNNDWRSQPQAAMGSASVGLDPDNLDYNKKILHASWHPFEDSVAIAATNNLFVFSKL.

WD repeat units follow at residues 27 to 66 and 87 to 128; these read TEAD…KGCE and EIEE…LKVV. Phosphoserine is present on serine 134. 4 WD repeats span residues 174–212, 223–263, 282–320, and 337–378; these read AHAY…HSFN, ELTE…LCDN, EIIS…APVK, and ENDC…PGDR.

This sequence belongs to the phosphatase 2A regulatory subunit B family. PP2A exists in several trimeric forms, all of which consist of a core composed of a catalytic subunit associated with a 65 kDa (PR65) (Subunit A) and a 55 kDa (PR55) (Subunit B) regulatory subunit.

Functionally, phosphatase 2A affects a variety of biological processes in the cell such as transcription, cell cycle progression and cellular morphogenesis, and provides an initial identification of critical substrates for this phosphatase. The regulatory subunit may direct the catalytic subunit to distinct, albeit overlapping, subsets of substrates. The chain is Protein phosphatase PP2A regulatory subunit B (pab1) from Schizosaccharomyces pombe (strain 972 / ATCC 24843) (Fission yeast).